A 146-amino-acid polypeptide reads, in one-letter code: Large ribosomal subunit protein bL19 (146 aa).

Positions 116–146 (ADRKRIDQDRAAERAAKEEAQKAQEPKASQE) are disordered. Over residues 119–146 (KRIDQDRAAERAAKEEAQKAQEPKASQE) the composition is skewed to basic and acidic residues.

Part of the 50S risobomal subunit. Contacts protein L14. Forms a bridge to the 30S subunit in the 70S ribosome, contacting the 16S rRNA.

Functionally, contacts the 16S rRNA of the 30S subunit (part of bridge B6), connecting the 2 subunits. The chain is Large ribosomal subunit protein bL19 (rplS) from Thermus thermophilus (strain ATCC 27634 / DSM 579 / HB8).